We begin with the raw amino-acid sequence, 100 residues long: Sweet protein mabinlin-4 (100 aa).

4 disulfide bridges follow: C4–C49, C17–C38, C39–C87, and C51–C95.

Belongs to the 2S seed storage albumins family. As to quaternary structure, heterodimer of a small A and a large B chain linked by disulfide bonds.

Its function is as follows. Heat stable 2S seed storage protein having sweetness-inducing activity. This chain is Sweet protein mabinlin-4, found in Capparis masaikai (Mabinlang).